A 215-amino-acid polypeptide reads, in one-letter code: Adenylate kinase (215 aa).

10–15 (GAGKGT) provides a ligand contact to ATP. Residues 30–59 (STGDILRANVREGTELGLAAKAYMDKGELV) are NMP. Residues threonine 31, arginine 36, 57–59 (ELV), 85–88 (GYPR), and glutamine 92 contribute to the AMP site. An LID region spans residues 126 to 162 (GRLMCKCGASYHIISNPPKKDNVCDICGGEVFQRADD). Arginine 127 is an ATP binding site. Residues cysteine 130 and cysteine 132 each contribute to the Zn(2+) site. 135-136 (SY) contributes to the ATP binding site. The Zn(2+) site is built by cysteine 149 and cysteine 152. 2 residues coordinate AMP: arginine 159 and arginine 170. ATP is bound at residue lysine 198.

It belongs to the adenylate kinase family. Monomer.

It is found in the cytoplasm. It catalyses the reaction AMP + ATP = 2 ADP. Its pathway is purine metabolism; AMP biosynthesis via salvage pathway; AMP from ADP: step 1/1. Catalyzes the reversible transfer of the terminal phosphate group between ATP and AMP. Plays an important role in cellular energy homeostasis and in adenine nucleotide metabolism. This chain is Adenylate kinase, found in Methanosarcina acetivorans (strain ATCC 35395 / DSM 2834 / JCM 12185 / C2A).